The chain runs to 299 residues: tRNA dimethylallyltransferase (299 aa).

ATP is bound at residue 13–20; the sequence is GPTASGKT. Residue 15–20 participates in substrate binding; it reads TASGKT. The interaction with substrate tRNA stretch occupies residues 38-41; sequence DSRQ.

It belongs to the IPP transferase family. As to quaternary structure, monomer. It depends on Mg(2+) as a cofactor.

The catalysed reaction is adenosine(37) in tRNA + dimethylallyl diphosphate = N(6)-dimethylallyladenosine(37) in tRNA + diphosphate. Its function is as follows. Catalyzes the transfer of a dimethylallyl group onto the adenine at position 37 in tRNAs that read codons beginning with uridine, leading to the formation of N6-(dimethylallyl)adenosine (i(6)A). The chain is tRNA dimethylallyltransferase from Prochlorococcus marinus subsp. pastoris (strain CCMP1986 / NIES-2087 / MED4).